Here is a 1134-residue protein sequence, read N- to C-terminus: MSYHNPPIPWRELEGRISGRPAPHGHQESHADQVGYRHVRKPFDRHPVRPEGPVVPYAELHCHSSYSFLDGASNPEDLVIRAVELGLSGLALTDHDGLYGVVRMAEAAEACGLSTIIGSELSIGVPEPQNGVADPVGSHLLVLANGPEGYRRLAEALTDAYLVEGGRKGRPVHDLDHLAEVADGHWTVLTGCRKGAVRQGLVKGMLQAEAELRRLVDLFGIDNVLVELTDHRAPTDSRDNDLLAELASRHSLLTVATTAAHYAGAEQFELACALSAVRARRSLDEMDGWLPPGPVARLRSGAEMADLFSRHRDAVDNTVAVAERTAFHLKSVRPRLPDQKVPDGHTPISWLRHLVEEGRRACYGDDPVAKDRLATELDLIEDRGFAGYFLIVSDIVEFAQSQGILCQGRGSAAASAVCYVLGITVVDPVFYGLPFERFLSVLREEEPDIDVDFDARRREEVIQYVYAKYGRRNAAQVADVITYRPRSAVRDMAKALGYSQGQQDAWSRQMERRSVPPLPHDPDGPEIPDDVTTLAQQVMGLPRHLGIHSAGMVLTREPVGRICPIEPARMFGRTVLQWDKEDCAWMGLVKFDLLGLGMLSALSISFDLISQHCGRFWTLASIPRNEPGVYDMLCRGDSIGVFQVESRAQIGALPRLKPRCFYDLAVEIGLIRPGPVQGGAVHPYIRRRTGVEPVTYPHPLLEPVLERTLGIPLFQEQLMQMATTVGNCTAADADLLRRAMGSKRGVERIDSLRTKLFEGMAANGIDDDTAQGIYARIESFANFGFAESHALSFAGLVYTSAWIKLHYPAVFLAALLRSQPMGFYSSATLVADARRHGVVTRRPDVARSSVGADLELLDACCEELGSEELETGIDECLHDHDESEIGAFDPNRDDGDHRRDTHFAVRLGLSDVSGINIETATRIVEERERESFASLDDLARRVDLSGEEVEALALAGAFDDLVGSRRGALWQIGQINGVAPGQLDVQVVTQPPLLPEPTQMELLGDDLRATGISTADHPVRQVRDALNRRGVVQVDRLDGVETRRRIEVAGVVTHRQRPGTAGGVTFLNLEDETGLLNVIVTPGAWRHYRRVARTSRALVVRGILERGDEGVMSLQADRLEALDLSVPTKSRDFR.

The interval 1–33 is disordered; the sequence is MSYHNPPIPWRELEGRISGRPAPHGHQESHADQ.

This sequence belongs to the DNA polymerase type-C family. DnaE2 subfamily.

Its subcellular location is the cytoplasm. The enzyme catalyses DNA(n) + a 2'-deoxyribonucleoside 5'-triphosphate = DNA(n+1) + diphosphate. Functionally, DNA polymerase involved in damage-induced mutagenesis and translesion synthesis (TLS). It is not the major replicative DNA polymerase. The chain is Error-prone DNA polymerase from Cutibacterium acnes (strain DSM 16379 / KPA171202) (Propionibacterium acnes).